Here is a 348-residue protein sequence, read N- to C-terminus: Ion-translocating oxidoreductase complex subunit D (348 aa).

The next 4 helical transmembrane spans lie at 23–43, 44–64, 72–91, and 126–146; these read WVLACALPGLIAQTYFFGYGT, LIQLLLAISVAVALEAGIMLL, ALRDYSAVVTAWLLAVAIPP, and IAYVVLLISFPVQMTSWMAPI. Residue Thr187 is modified to FMN phosphoryl threonine. 5 helical membrane passes run 214-234, 243-263, 266-286, 300-320, and 321-341; these read FAGIGWEWVNIAYLLGGLILL, IPMAMLAGLVFTALLAQLFAP, TASPMIHLLSGATMLGAFFIA, LIYGFFIGAMVFLIRSWGGFP, and DGVAFAVLLANMCVPLIDYYT.

Belongs to the NqrB/RnfD family. As to quaternary structure, the complex is composed of six subunits: RnfA, RnfB, RnfC, RnfD, RnfE and RnfG. The cofactor is FMN.

It localises to the cell inner membrane. Functionally, part of a membrane-bound complex that couples electron transfer with translocation of ions across the membrane. This chain is Ion-translocating oxidoreductase complex subunit D, found in Vibrio cholerae serotype O1 (strain ATCC 39315 / El Tor Inaba N16961).